We begin with the raw amino-acid sequence, 194 residues long: Lipoprotein signal peptidase (194 aa).

Helical transmembrane passes span 75–95 (TIFLITNMIIVCYLYYLMICS) and 97–117 (TIGSFAGYSFVIGGAIGNLID). Catalysis depends on residues aspartate 126 and aspartate 144. The helical transmembrane segment at 135-155 (YSFPVFNLADCFITLGVIILM) threads the bilayer.

The protein belongs to the peptidase A8 family.

It localises to the cell inner membrane. It carries out the reaction Release of signal peptides from bacterial membrane prolipoproteins. Hydrolyzes -Xaa-Yaa-Zaa-|-(S,diacylglyceryl)Cys-, in which Xaa is hydrophobic (preferably Leu), and Yaa (Ala or Ser) and Zaa (Gly or Ala) have small, neutral side chains.. The protein operates within protein modification; lipoprotein biosynthesis (signal peptide cleavage). Functionally, this protein specifically catalyzes the removal of signal peptides from prolipoproteins. This Rickettsia prowazekii (strain Madrid E) protein is Lipoprotein signal peptidase.